An 87-amino-acid chain; its full sequence is Probable Fe(2+)-trafficking protein (87 aa).

Belongs to the Fe(2+)-trafficking protein family.

Its function is as follows. Could be a mediator in iron transactions between iron acquisition and iron-requiring processes, such as synthesis and/or repair of Fe-S clusters in biosynthetic enzymes. In Francisella tularensis subsp. novicida (strain U112), this protein is Probable Fe(2+)-trafficking protein.